A 146-amino-acid polypeptide reads, in one-letter code: Cystatin-C (146 aa).

A signal peptide spans 1 to 26 (MAGPLRAPLLLLAILAVALALSPAAG). Position 43 is a phosphoserine (Ser-43). The short motif at 81–85 (QIVAG) is the Secondary area of contact element. 2 disulfides stabilise this stretch: Cys-99-Cys-109 and Cys-123-Cys-143.

It belongs to the cystatin family.

The protein resides in the secreted. Its function is as follows. As an inhibitor of cysteine proteinases, this protein is thought to serve an important physiological role as a local regulator of this enzyme activity. This is Cystatin-C (CST3) from Saimiri sciureus (Common squirrel monkey).